Reading from the N-terminus, the 243-residue chain is uncharacterized protein (243 aa).

This is an uncharacterized protein from Acidianus bottle-shaped virus (isolate Italy/Pozzuoli) (ABV).